A 400-amino-acid polypeptide reads, in one-letter code: Glutamyl-tRNA reductase (400 aa).

Substrate contacts are provided by residues 45 to 48 (TCNR), S103, 108 to 110 (EDQ), and Q114. The active-site Nucleophile is the C46. 179-184 (GYGEIG) is a binding site for NADP(+).

The protein belongs to the glutamyl-tRNA reductase family. As to quaternary structure, homodimer.

The catalysed reaction is (S)-4-amino-5-oxopentanoate + tRNA(Glu) + NADP(+) = L-glutamyl-tRNA(Glu) + NADPH + H(+). It functions in the pathway porphyrin-containing compound metabolism; protoporphyrin-IX biosynthesis; 5-aminolevulinate from L-glutamyl-tRNA(Glu): step 1/2. Functionally, catalyzes the NADPH-dependent reduction of glutamyl-tRNA(Glu) to glutamate 1-semialdehyde (GSA). The polypeptide is Glutamyl-tRNA reductase (Clostridium perfringens (strain SM101 / Type A)).